Here is a 428-residue protein sequence, read N- to C-terminus: RF4 protein (428 aa).

Asparagine 8, asparagine 205, and asparagine 344 each carry an N-linked (GlcNAc...) asparagine glycan.

Functionally, not known. The protein is RF4 protein (RF4) of Kluyveromyces lactis (strain ATCC 8585 / CBS 2359 / DSM 70799 / NBRC 1267 / NRRL Y-1140 / WM37) (Yeast).